The chain runs to 452 residues: Major royal jelly protein 2 (452 aa).

The N-terminal stretch at 1–17 (MTRWLFMVACLGIACQG) is a signal peptide. 2 N-linked (GlcNAc...) asparagine glycosylation sites follow: Asn145 and Asn178. The interval 416–452 (NNNQNDNIQNTNNQNDNNQKNNKKNANNQKNNNQNDN) is disordered.

N-linked core structure contains mannose (which consists of 8-alpha-mannosyl residues, one beta-mannosyl residue, and chitobiose). Secreted from the hypopharyngeal glands of the worker honey bee (at protein level); expression peaks at 12 days post eclosion. Expressed in the brains of adult worker bees peaking at 12 days post eclosion (at protein level). Expressed in the spermatheca of adult queen bees (at protein level); Expression levels are higher in mated queens than in virgin queens.

Its subcellular location is the secreted. Highly abundant protein component of royal jelly, a substance produced in the hypopharyngeal gland containing proteins, free amino acids, fatty acids, sugars and other nutrients, which is fed to developing larvae by worker nurse bees. Major royal jelly proteins (MRJPs) are high in essential amino acids and probably have a nutritional function in larval food. All larvae are fed some royal jelly (also known as worker jelly) early in their development but it forms the principal source of nutrition for larvae destined to become queen bees. Produced in the spermatheca of adult queen bees, along with other major royal jelly proteins, where it may act as a nutrient supply for sperm stored by mated queens, or be involved in energy metabolism. The protein is Major royal jelly protein 2 of Apis mellifera (Honeybee).